Reading from the N-terminus, the 290-residue chain is MKKLRIGARDSKLSRIQVDIVARKIKQTLGIECEFVPIKTKGDIDKTKSLKDFKSPGVFVKEIELALLSREIDLAVHSLKDLPCEMDSNFEIVAVVEREDPRDVLVSKDGVGFYQLKPNAKIGTSSLRREVHLKNLRQDIQVVNIRGNIETRLSKIESEGLDGVVLAYAALKRLNLDSHVSYIFDVNEITPCPGQGAICIECLKDSPYKNILSKINDADAYIQTQFERLVLKFLGGGCHSSIGVFCKTDQDKIYAFASILSGDKLIKASIEGDKDDFLSLANKLSNMLKS.

Cys-238 bears the S-(dipyrrolylmethanemethyl)cysteine mark.

Belongs to the HMBS family. As to quaternary structure, monomer. It depends on dipyrromethane as a cofactor.

The enzyme catalyses 4 porphobilinogen + H2O = hydroxymethylbilane + 4 NH4(+). It participates in porphyrin-containing compound metabolism; protoporphyrin-IX biosynthesis; coproporphyrinogen-III from 5-aminolevulinate: step 2/4. In terms of biological role, tetrapolymerization of the monopyrrole PBG into the hydroxymethylbilane pre-uroporphyrinogen in several discrete steps. In Caldicellulosiruptor saccharolyticus (strain ATCC 43494 / DSM 8903 / Tp8T 6331), this protein is Porphobilinogen deaminase.